We begin with the raw amino-acid sequence, 355 residues long: S-adenosylmethionine:tRNA ribosyltransferase-isomerase (355 aa).

It belongs to the QueA family. In terms of assembly, monomer.

Its subcellular location is the cytoplasm. The enzyme catalyses 7-aminomethyl-7-carbaguanosine(34) in tRNA + S-adenosyl-L-methionine = epoxyqueuosine(34) in tRNA + adenine + L-methionine + 2 H(+). It participates in tRNA modification; tRNA-queuosine biosynthesis. Transfers and isomerizes the ribose moiety from AdoMet to the 7-aminomethyl group of 7-deazaguanine (preQ1-tRNA) to give epoxyqueuosine (oQ-tRNA). This chain is S-adenosylmethionine:tRNA ribosyltransferase-isomerase, found in Burkholderia ambifaria (strain ATCC BAA-244 / DSM 16087 / CCUG 44356 / LMG 19182 / AMMD) (Burkholderia cepacia (strain AMMD)).